A 485-amino-acid polypeptide reads, in one-letter code: Glutamyl-tRNA(Gln) amidotransferase subunit A (485 aa).

Catalysis depends on charge relay system residues lysine 79 and serine 154. The active-site Acyl-ester intermediate is serine 178.

It belongs to the amidase family. GatA subfamily. Heterotrimer of A, B and C subunits.

The enzyme catalyses L-glutamyl-tRNA(Gln) + L-glutamine + ATP + H2O = L-glutaminyl-tRNA(Gln) + L-glutamate + ADP + phosphate + H(+). In terms of biological role, allows the formation of correctly charged Gln-tRNA(Gln) through the transamidation of misacylated Glu-tRNA(Gln) in organisms which lack glutaminyl-tRNA synthetase. The reaction takes place in the presence of glutamine and ATP through an activated gamma-phospho-Glu-tRNA(Gln). In Persephonella marina (strain DSM 14350 / EX-H1), this protein is Glutamyl-tRNA(Gln) amidotransferase subunit A.